The following is a 602-amino-acid chain: Aspartate--tRNA(Asp/Asn) ligase (602 aa).

Residue Glu-175 participates in L-aspartate binding. Residues 199–202 (QIFK) form an aspartate region. Arg-221 is an L-aspartate binding site. ATP contacts are provided by residues 221–223 (RDE) and Gln-230. Residue His-458 coordinates L-aspartate. Residue Glu-492 participates in ATP binding. Arg-499 provides a ligand contact to L-aspartate. 544-547 (GLDR) contacts ATP.

Belongs to the class-II aminoacyl-tRNA synthetase family. Type 1 subfamily. As to quaternary structure, homodimer.

It is found in the cytoplasm. The catalysed reaction is tRNA(Asx) + L-aspartate + ATP = L-aspartyl-tRNA(Asx) + AMP + diphosphate. Functionally, aspartyl-tRNA synthetase with relaxed tRNA specificity since it is able to aspartylate not only its cognate tRNA(Asp) but also tRNA(Asn). Reaction proceeds in two steps: L-aspartate is first activated by ATP to form Asp-AMP and then transferred to the acceptor end of tRNA(Asp/Asn). The chain is Aspartate--tRNA(Asp/Asn) ligase from Cupriavidus taiwanensis (strain DSM 17343 / BCRC 17206 / CCUG 44338 / CIP 107171 / LMG 19424 / R1) (Ralstonia taiwanensis (strain LMG 19424)).